Consider the following 1367-residue polypeptide: METQLQSIFEEVVKTEIIEEAFPGMFMDTPEDEKTKLISCLAAFRQFWSGLSQESHEQCVQWIVKFIHGQHSPKRISFLYDCLAMAVETGLLPPRMVCESLINSDSLEWERTQLWALTFKLVRKIIGGVDYKGVRDLLKAILEKILTIPNTVSSAVVQQLLAAREVIAYILERNACLLPAYFAVTEIRKLYPEGKLPHWLLGNLVSDFVDTFRPTARINSICGRCSLLPVVNNSGAICNSWKLDPATLRFPLKGLLPYDKDLFEPQTALLRYVLEQPYSRDMVCNMLGLNKQHKQRCPVLEDQLVDLVVYAMERSETEEKFDDGGTSQLLWQHLSSQLIFFVLFQFASFPHMVLSLHQKLAGRGLIKGRDHLMWVLLQFISGSIQKNALADFLPVMKLFDLLYPEKECIPVPDINKPQSTHAFAMTCIWIHLNRKAQNGDSTLQIPIPHSLKLHHEFLQQSLRNKSLQMNDYKIALLCNAYSTNSECFTLPMGALVETIYGNGIMRVPLPGTSCLASASVTPLPMNLLDSLTVHAKMSLIHSIATRVIKLAHTKSSVALAPALVETYSRLLVYMEIESLGIKGFISQLLPTVFKSHAWGILHTLLEMFSHRMHHIQPHYRVQLLSHLHTLAAVAQTNQNQLHLCVESTALRLITALGSSEVQPQFTRFLNDPKTVLSAESEELNRALILTLARATHVTDFFTGSDSIQGTWCKDILQTIMNFTPHNWASHTLSCFPAPLQAFFKQNNVPQESRFNLKKNVEEEYRKWKSMTDENEIITQFSVQGFPPLFLCLLWKMLLETDHISQIGYKVLERIGARALVAHVRTFADFLVYEFSTSAGGQQLNKCIEILNDMVWKYNIVTLDRLILCLAMRSHEGNEAQVCYFIIQLLLLKPNDFRNRVSDFVKENSPEHWLQSDWHTKHMSYHKKYPEKLYFEGLAEQVDPPVPIQSPYLPIYFGNVCLRFLPVFDIVIHRFLELLPVSKSLETLLDHLGGLYKFHDRPVTYLYNTLHYYEMCLRNRDHLKRKLVHAIIGSLKDNRPQGWCLSDTYLKHAMNAREDNPWVPEDSYYCKLIGRLVDTMAGKSPGPFPNCDWRFNEFPNPAAHALHVTCVELMALAVPGKDVGNALLNVVLKSQPLVPRENITAWMNAIGLIITALPEPYWIVLHDRIVNVISSSSLTSETEWVGYPFRLFDFTACHQSYSEMSCSYTLALAHAVWHHSSIGQLSLIPKFLTEALLPVVKTEFQLLYVYHLVGPFLQRFQQERTRCMIEIGVAFYDMLLNVDQCSTHLNYMDPICDFLYHMKYMFTGDSVKEQVEKIICNLKPALKLRLRFITHISKMEPAVPPQALNSGSPAPQSNQVPASLPVTQ.

The interval 1343 to 1367 is disordered; sequence PPQALNSGSPAPQSNQVPASLPVTQ. Over residues 1346-1367 the composition is skewed to polar residues; that stretch reads ALNSGSPAPQSNQVPASLPVTQ.

The protein belongs to the Mediator complex subunit 23 family. In terms of assembly, component of the Mediator complex, which is composed of MED1, MED4, MED6, MED7, MED8, MED9, MED10, MED11, MED12, MED13, MED13L, MED14, MED15, MED16, MED17, MED18, MED19, MED20, MED21, MED22, MED23, MED24, MED25, MED26, MED27, MED29, MED30, MED31, CCNC, CDK8 and CDC2L6/CDK11. The MED12, MED13, CCNC and CDK8 subunits form a distinct module termed the CDK8 module. Mediator containing the CDK8 module is less active than Mediator lacking this module in supporting transcriptional activation. Individual preparations of the Mediator complex lacking one or more distinct subunits have been variously termed ARC, CRSP, DRIP, PC2, SMCC and TRAP. Interacts with CEBPB (when not methylated), CTNNB1, and GLI3. Interacts with CDK8 and ELK1.

The protein localises to the nucleus. Its function is as follows. Component of the Mediator complex, a coactivator involved in the regulated transcription of nearly all RNA polymerase II-dependent genes. Mediator functions as a bridge to convey information from gene-specific regulatory proteins to the basal RNA polymerase II transcription machinery. Mediator is recruited to promoters by direct interactions with regulatory proteins and serves as a scaffold for the assembly of a functional pre-initiation complex with RNA polymerase II and the general transcription factors. Also required for transcriptional activation subsequent to the assembly of the pre-initiation complex. Required for transcriptional activation by adenovirus E1A protein. Required for ELK1-dependent transcriptional activation in response to activated Ras signaling. This is Mediator of RNA polymerase II transcription subunit 23 (Med23) from Mus musculus (Mouse).